The chain runs to 102 residues: Small ribosomal subunit protein uS10 (102 aa).

Belongs to the universal ribosomal protein uS10 family. In terms of assembly, part of the 30S ribosomal subunit.

Its function is as follows. Involved in the binding of tRNA to the ribosomes. The chain is Small ribosomal subunit protein uS10 from Moorella thermoacetica (strain ATCC 39073 / JCM 9320).